A 163-amino-acid chain; its full sequence is Nucleotide-binding protein CGSHiGG_08790 (163 aa).

The protein belongs to the YajQ family.

Its function is as follows. Nucleotide-binding protein. This chain is Nucleotide-binding protein CGSHiGG_08790, found in Haemophilus influenzae (strain PittGG).